Consider the following 603-residue polypeptide: Elongation factor 4 (603 aa).

A tr-type G domain is found at 7–189; that stretch reads SHIRNFSIIA…SIVHLVPPPR (183 aa). GTP is bound by residues 19 to 24 and 136 to 139; these read DHGKST and NKID.

This sequence belongs to the TRAFAC class translation factor GTPase superfamily. Classic translation factor GTPase family. LepA subfamily.

It is found in the cell inner membrane. It carries out the reaction GTP + H2O = GDP + phosphate + H(+). Required for accurate and efficient protein synthesis under certain stress conditions. May act as a fidelity factor of the translation reaction, by catalyzing a one-codon backward translocation of tRNAs on improperly translocated ribosomes. Back-translocation proceeds from a post-translocation (POST) complex to a pre-translocation (PRE) complex, thus giving elongation factor G a second chance to translocate the tRNAs correctly. Binds to ribosomes in a GTP-dependent manner. This chain is Elongation factor 4, found in Thermosynechococcus vestitus (strain NIES-2133 / IAM M-273 / BP-1).